A 309-amino-acid polypeptide reads, in one-letter code: Malate dehydrogenase (309 aa).

Residues 9-14 (GAGFVG) and Asp-33 each bind NAD(+). Residues Arg-82 and Arg-88 each coordinate substrate. Residues Asn-95 and 118–120 (VNN) each bind NAD(+). Asn-120 and Arg-151 together coordinate substrate. The active-site Proton acceptor is the His-175.

It belongs to the LDH/MDH superfamily. MDH type 3 family.

The enzyme catalyses (S)-malate + NAD(+) = oxaloacetate + NADH + H(+). Its function is as follows. Catalyzes the reversible oxidation of malate to oxaloacetate. The protein is Malate dehydrogenase of Roseiflexus castenholzii (strain DSM 13941 / HLO8).